The sequence spans 593 residues: Salivary alpha-glucosidase (593 aa).

Positions 1–19 are cleaved as a signal peptide; that stretch reads MPPLGVLLLLVALGHSTQG. Ca(2+) is bound by residues aspartate 49, aspartate 51, aspartate 53, isoleucine 55, aspartate 57, and asparagine 130. N-linked (GlcNAc...) asparagine glycans are attached at residues asparagine 130 and asparagine 163. Ca(2+) contacts are provided by aspartate 201, tyrosine 235, leucine 236, and glutamate 238. N-linked (GlcNAc...) asparagine glycans are attached at residues asparagine 295, asparagine 310, asparagine 338, asparagine 414, asparagine 445, and asparagine 453. Asparagine 338 contacts N-acetyl-beta-D-glucosamine.

It belongs to the glycosyl hydrolase 13 family. Saliva (at protein level). Proximal lateral lobes of the salivary gland (at protein level).

Its subcellular location is the secreted. The catalysed reaction is Hydrolysis of terminal, non-reducing (1-&gt;4)-linked alpha-D-glucose residues with release of alpha-D-glucose.. Functions as a glucosidase that shows high activity toward sucrose, a major component of nectar. Assists the mosquito in its sugar-feeding capabilities. This is Salivary alpha-glucosidase from Anopheles gambiae (African malaria mosquito).